A 37-amino-acid chain; its full sequence is MKVRASVKKLCRNCKIVKREGVVRVLCSDPKHKQRQG.

The protein belongs to the bacterial ribosomal protein bL36 family.

The chain is Large ribosomal subunit protein bL36 from Pasteurella multocida (strain Pm70).